The sequence spans 136 residues: Large ribosomal subunit protein uL16c (136 aa).

This sequence belongs to the universal ribosomal protein uL16 family. As to quaternary structure, part of the 50S ribosomal subunit.

It localises to the plastid. Its subcellular location is the chloroplast. The chain is Large ribosomal subunit protein uL16c from Citrus sinensis (Sweet orange).